Here is a 428-residue protein sequence, read N- to C-terminus: MSKSDQLFEQARQTIPGGVNSPVRAFNGVGGTPRFIDHADGAYLYDVDGQAYVDYIGSWGPMLLGHNHPAIKAAVIKAVEKGLSYGAPTEIEVLMAEKVRQIVPSMEQVRMVNSGTEATMSAIRLARGYTGRDKIVKFEGCYHGHADSLLVKAGSGALTLGQPNSPGVPADFAKHTLTCVFNDLDSVREAFTQYGCDIACIIVEPVAGNMNCIPPVPGFLEGLRTICDEFGALLILDEVMTGFRVSLRGAQGYYNIDPDLTTLGKIIGAGMPVGAFGGKKKVMQHIAPTGPVYQAGTLSGNPVAMAAGLTMLDLLLEPGLYEQLNAKTARVAEGLKAAAAKHGIPLAINYVGGMFGFFFTDEPEITRYEQVTRCDMERFKRFYHLMLEEGVYLAPSAYEAGFLSLAHGDKEIEHTLAAAERSFAKLAG.

The residue at position 265 (Lys-265) is an N6-(pyridoxal phosphate)lysine.

Belongs to the class-III pyridoxal-phosphate-dependent aminotransferase family. HemL subfamily. In terms of assembly, homodimer. Requires pyridoxal 5'-phosphate as cofactor.

It localises to the cytoplasm. It catalyses the reaction (S)-4-amino-5-oxopentanoate = 5-aminolevulinate. Its pathway is porphyrin-containing compound metabolism; protoporphyrin-IX biosynthesis; 5-aminolevulinate from L-glutamyl-tRNA(Glu): step 2/2. This Aeromonas salmonicida (strain A449) protein is Glutamate-1-semialdehyde 2,1-aminomutase.